The primary structure comprises 143 residues: Hemoglobin cathodic subunit alpha (143 aa).

The residue at position 1 (serine 1) is an N-acetylserine. The Globin domain occupies 1 to 143 (SLAPGDKTVV…VCAALSDKYR (143 aa)). Residue histidine 59 participates in O2 binding. Residue histidine 89 participates in heme b binding.

Belongs to the globin family. In terms of assembly, heterotetramer of two alpha chains and two beta chains. As to expression, red blood cells.

Involved in oxygen transport from gills to the various peripheral tissues. This Gymnothorax unicolor (Brown moray) protein is Hemoglobin cathodic subunit alpha.